We begin with the raw amino-acid sequence, 248 residues long: Sugar fermentation stimulation protein homolog (248 aa).

The protein belongs to the SfsA family.

The sequence is that of Sugar fermentation stimulation protein homolog from Prochlorococcus marinus subsp. pastoris (strain CCMP1986 / NIES-2087 / MED4).